The primary structure comprises 662 residues: Acetyl-coenzyme A synthetase (662 aa).

CoA is bound by residues 197 to 200 (RKGK) and Thr-317. Residues 393–395 (GEP), 417–422 (DTWWQT), Asp-510, and Arg-525 each bind ATP. Residue Ser-533 coordinates CoA. Arg-536 serves as a coordination point for ATP. Mg(2+) is bound by residues His-549 and Val-552. Lys-623 is modified (N6-acetyllysine).

It belongs to the ATP-dependent AMP-binding enzyme family. It depends on Mg(2+) as a cofactor. Post-translationally, acetylated. Deacetylation by the SIR2-homolog deacetylase activates the enzyme.

It carries out the reaction acetate + ATP + CoA = acetyl-CoA + AMP + diphosphate. Its function is as follows. Catalyzes the conversion of acetate into acetyl-CoA (AcCoA), an essential intermediate at the junction of anabolic and catabolic pathways. AcsA undergoes a two-step reaction. In the first half reaction, AcsA combines acetate with ATP to form acetyl-adenylate (AcAMP) intermediate. In the second half reaction, it can then transfer the acetyl group from AcAMP to the sulfhydryl group of CoA, forming the product AcCoA. This is Acetyl-coenzyme A synthetase from Helicobacter pylori (strain G27).